Consider the following 647-residue polypeptide: Threonine--tRNA ligase (647 aa).

In terms of domain architecture, TGS spans 1 to 63 (MEVRVEGQMV…PAGCTGIEPV (63 aa)). Residues 244–535 (DHRKLGRELS…LVENFAGALP (292 aa)) are catalytic. Positions 336, 387, and 512 each coordinate Zn(2+).

The protein belongs to the class-II aminoacyl-tRNA synthetase family. In terms of assembly, homodimer. Requires Zn(2+) as cofactor.

It is found in the cytoplasm. It catalyses the reaction tRNA(Thr) + L-threonine + ATP = L-threonyl-tRNA(Thr) + AMP + diphosphate + H(+). Its function is as follows. Catalyzes the attachment of threonine to tRNA(Thr) in a two-step reaction: L-threonine is first activated by ATP to form Thr-AMP and then transferred to the acceptor end of tRNA(Thr). Also edits incorrectly charged L-seryl-tRNA(Thr). This is Threonine--tRNA ligase from Desulfovibrio desulfuricans (strain ATCC 27774 / DSM 6949 / MB).